Here is a 179-residue protein sequence, read N- to C-terminus: Shikimate kinase (179 aa).

Residue 15 to 20 participates in ATP binding; that stretch reads GAGKTS. Threonine 19 contacts Mg(2+). Substrate-binding residues include aspartate 37, arginine 61, and glycine 83. Arginine 122 is a binding site for ATP. Residue arginine 142 participates in substrate binding.

It belongs to the shikimate kinase family. Monomer. Requires Mg(2+) as cofactor.

It is found in the cytoplasm. The catalysed reaction is shikimate + ATP = 3-phosphoshikimate + ADP + H(+). Its pathway is metabolic intermediate biosynthesis; chorismate biosynthesis; chorismate from D-erythrose 4-phosphate and phosphoenolpyruvate: step 5/7. Its function is as follows. Catalyzes the specific phosphorylation of the 3-hydroxyl group of shikimic acid using ATP as a cosubstrate. This Coxiella burnetii (strain Dugway 5J108-111) protein is Shikimate kinase.